The following is a 238-amino-acid chain: LexA repressor (238 aa).

The segment at residues 26-46 is a DNA-binding region (H-T-H motif); that stretch reads FDEMKDALDLRSKSGIHRLIT. Residues Ser159 and Lys197 each act as for autocatalytic cleavage activity in the active site.

The protein belongs to the peptidase S24 family. As to quaternary structure, homodimer.

The catalysed reaction is Hydrolysis of Ala-|-Gly bond in repressor LexA.. Its function is as follows. Represses a number of genes involved in the response to DNA damage (SOS response), including recA and lexA. In the presence of single-stranded DNA, RecA interacts with LexA causing an autocatalytic cleavage which disrupts the DNA-binding part of LexA, leading to derepression of the SOS regulon and eventually DNA repair. This is LexA repressor from Rhodobacter capsulatus (Rhodopseudomonas capsulata).